The sequence spans 373 residues: Peptide chain release factor 2 (373 aa).

N5-methylglutamine is present on Gln-251.

Belongs to the prokaryotic/mitochondrial release factor family. Post-translationally, methylated by PrmC. Methylation increases the termination efficiency of RF2.

The protein localises to the cytoplasm. Functionally, peptide chain release factor 2 directs the termination of translation in response to the peptide chain termination codons UGA and UAA. The sequence is that of Peptide chain release factor 2 from Salinispora arenicola (strain CNS-205).